The sequence spans 189 residues: Molybdopterin synthase catalytic subunit (189 aa).

Over residues M1–E30 the composition is skewed to polar residues. The tract at residues M1–E41 is disordered. Position 20 is a phosphoserine (S20). The segment covering S32–E41 has biased composition (basic and acidic residues). Residues H143–R144, K159, and K166–E168 contribute to the substrate site.

The protein belongs to the MoaE family. MOCS2B subfamily. Heterotetramer; composed of 2 small (MOCS2A) and 2 large (MOCS2B) subunits.

The protein localises to the cytoplasm. The protein resides in the cytosol. The enzyme catalyses 2 [molybdopterin-synthase sulfur-carrier protein]-C-terminal-Gly-aminoethanethioate + cyclic pyranopterin phosphate + H2O = molybdopterin + 2 [molybdopterin-synthase sulfur-carrier protein]-C-terminal Gly-Gly + 2 H(+). It participates in cofactor biosynthesis; molybdopterin biosynthesis. Catalytic subunit of the molybdopterin synthase complex, a complex that catalyzes the conversion of precursor Z into molybdopterin. Acts by mediating the incorporation of 2 sulfur atoms from thiocarboxylated MOCS2A into precursor Z to generate a dithiolene group. The protein is Molybdopterin synthase catalytic subunit of Mus musculus (Mouse).